The primary structure comprises 306 residues: Porphobilinogen deaminase (306 aa).

At cysteine 239 the chain carries S-(dipyrrolylmethanemethyl)cysteine.

This sequence belongs to the HMBS family. In terms of assembly, monomer. The cofactor is dipyrromethane.

It carries out the reaction 4 porphobilinogen + H2O = hydroxymethylbilane + 4 NH4(+). The protein operates within porphyrin-containing compound metabolism; protoporphyrin-IX biosynthesis; coproporphyrinogen-III from 5-aminolevulinate: step 2/4. Functionally, tetrapolymerization of the monopyrrole PBG into the hydroxymethylbilane pre-uroporphyrinogen in several discrete steps. This chain is Porphobilinogen deaminase, found in Helicobacter acinonychis (strain Sheeba).